Reading from the N-terminus, the 129-residue chain is Transcriptional activator protein (129 aa).

The short motif at 13 to 28 (KAQHKIAKRRAVRRRR) is the Nuclear localization signal element. Residues 33-50 (CGCSIFLHINCADNGFTH) fold into a zinc finger. The tract at residues 73-109 (IFQDTTRRGPVVHQNQDLPHPSPVQPQPTESIGSPQS) is disordered. Residue Ser109 is modified to Phosphoserine; by host. A transactivation region spans residues 115–129 (SLDDFDESFWADIFK).

The protein belongs to the geminiviridae transcriptional activator protein family. As to quaternary structure, monomer. Homodimer. Homooligomer. Self-interaction correlates with nuclear localization and efficient activation of transcription. Monomers suppress local silencing by interacting with and inactivating host adenosine kinase 2 (ADK2) in the cytoplasm. Interacts with and inhibits host SNF1 kinase. Binds to ssDNA. Post-translationally, phosphorylated at Ser-109 by A.thaliana KIN10.

It localises to the host nucleus. Its subcellular location is the host cytoplasm. Functionally, strong activator of the late viral genes promoters. Enhances the expression of the capsid protein and nuclear shuttle protein. Acts as a suppressor of RNA-mediated gene silencing, also known as post-transcriptional gene silencing (PTGS), a mechanism of plant viral defense that limits the accumulation of viral RNAs. Suppresses the host RNA silencing by inhibiting adenosine kinase 2 (ADK2), a kinase involved in a general methylation pathway. Also suppresses the host basal defense by interacting with and inhibiting SNF1 kinase, a key regulator of cell metabolism implicated in innate antiviral defense. Determines pathogenicity. In Cabbage leaf curl virus (isolate Jamaica) (CaLCuV), this protein is Transcriptional activator protein.